The chain runs to 695 residues: Putative ATP-dependent DNA helicase R568 (695 aa).

Residues 86 to 499 (KFSEEQIKYI…FRNEEIFDSN (414 aa)) form the UvrD-like helicase ATP-binding domain. Residue 107-114 (ACAGSGKT) coordinates ATP.

Belongs to the helicase family. UvrD subfamily.

The enzyme catalyses Couples ATP hydrolysis with the unwinding of duplex DNA by translocating in the 3'-5' direction.. It catalyses the reaction ATP + H2O = ADP + phosphate + H(+). Functionally, ATP-dependent DNA helicase. In Acanthamoeba polyphaga mimivirus (APMV), this protein is Putative ATP-dependent DNA helicase R568.